The chain runs to 82 residues: MAKVCMVTGKRPISGNNVSHANNKTRRRFYPNLHKHRFWVESENRFVKLKLSAKGFRIIDKKGINIVLTEIRARGKFKESSL.

The protein belongs to the bacterial ribosomal protein bL28 family.

This is Large ribosomal subunit protein bL28 from Vesicomyosocius okutanii subsp. Calyptogena okutanii (strain HA).